The following is a 74-amino-acid chain: Bacteriocin hiracin-JM79 (74 aa).

An N-terminal signal peptide occupies residues 1 to 30 (MKKKVLKHCVILGILGTCLAGIGTGIKVDA).

The protein resides in the secreted. Bacteriocin with antibacterial activity against the Gram-positive Listeria, Enterococcus, Propionibacterium, Staphylococcus and some strains of Clostridium, Lactobacillus and Pediococcus. Lacks antibacterial activity against Gram-negative bacteria. The protein is Bacteriocin hiracin-JM79 of Enterococcus hirae.